Here is a 108-residue protein sequence, read N- to C-terminus: UPF0145 protein THA_1434 (108 aa).

Belongs to the UPF0145 family.

This chain is UPF0145 protein THA_1434, found in Thermosipho africanus (strain TCF52B).